The sequence spans 385 residues: S-adenosylmethionine synthase (385 aa).

Residue His16 coordinates ATP. Residue Asp18 coordinates Mg(2+). Position 44 (Glu44) interacts with K(+). Positions 57 and 100 each coordinate L-methionine. The flexible loop stretch occupies residues 100–110 (QSPDINQGVDR). ATP-binding positions include 164–166 (DGK), 230–231 (KF), Asp239, 245–246 (RK), Ala262, and Lys266. Residue Asp239 participates in L-methionine binding. Lys270 contacts L-methionine.

This sequence belongs to the AdoMet synthase family. In terms of assembly, homotetramer; dimer of dimers. Mg(2+) is required as a cofactor. It depends on K(+) as a cofactor.

It localises to the cytoplasm. The enzyme catalyses L-methionine + ATP + H2O = S-adenosyl-L-methionine + phosphate + diphosphate. Its pathway is amino-acid biosynthesis; S-adenosyl-L-methionine biosynthesis; S-adenosyl-L-methionine from L-methionine: step 1/1. Functionally, catalyzes the formation of S-adenosylmethionine (AdoMet) from methionine and ATP. The overall synthetic reaction is composed of two sequential steps, AdoMet formation and the subsequent tripolyphosphate hydrolysis which occurs prior to release of AdoMet from the enzyme. This is S-adenosylmethionine synthase from Helicobacter pylori (strain HPAG1).